Consider the following 194-residue polypeptide: ATP-dependent Clp protease proteolytic subunit (194 aa).

The active-site Nucleophile is serine 99. Residue histidine 124 is part of the active site.

This sequence belongs to the peptidase S14 family. In terms of assembly, fourteen ClpP subunits assemble into 2 heptameric rings which stack back to back to give a disk-like structure with a central cavity, resembling the structure of eukaryotic proteasomes.

It localises to the cytoplasm. The catalysed reaction is Hydrolysis of proteins to small peptides in the presence of ATP and magnesium. alpha-casein is the usual test substrate. In the absence of ATP, only oligopeptides shorter than five residues are hydrolyzed (such as succinyl-Leu-Tyr-|-NHMec, and Leu-Tyr-Leu-|-Tyr-Trp, in which cleavage of the -Tyr-|-Leu- and -Tyr-|-Trp bonds also occurs).. In terms of biological role, cleaves peptides in various proteins in a process that requires ATP hydrolysis. Has a chymotrypsin-like activity. Plays a major role in the degradation of misfolded proteins. The sequence is that of ATP-dependent Clp protease proteolytic subunit from Clostridium perfringens (strain ATCC 13124 / DSM 756 / JCM 1290 / NCIMB 6125 / NCTC 8237 / Type A).